A 201-amino-acid polypeptide reads, in one-letter code: Holliday junction resolvase RecU (201 aa).

Positions 85, 87, 100, and 119 each coordinate Mg(2+).

Belongs to the RecU family. The cofactor is Mg(2+).

It localises to the cytoplasm. The catalysed reaction is Endonucleolytic cleavage at a junction such as a reciprocal single-stranded crossover between two homologous DNA duplexes (Holliday junction).. Functionally, endonuclease that resolves Holliday junction intermediates in genetic recombination. Cleaves mobile four-strand junctions by introducing symmetrical nicks in paired strands. Promotes annealing of linear ssDNA with homologous dsDNA. Required for DNA repair, homologous recombination and chromosome segregation. The protein is Holliday junction resolvase RecU of Pediococcus pentosaceus (strain ATCC 25745 / CCUG 21536 / LMG 10740 / 183-1w).